The sequence spans 317 residues: Mitochondrial thiamine pyrophosphate carrier 1 (317 aa).

6 helical membrane-spanning segments follow: residues 15–37 (TVSW…MATA), 80–100 (IPAT…YSWF), 118–138 (LTVG…LDLL), 168–190 (GFFT…MFLT), 205–227 (FWSR…TMVF), and 281–300 (GLTM…LFVY). Solcar repeat units lie at residues 16 to 103 (VSWY…FNNV), 112 to 197 (SQQG…VNIV), and 206 to 306 (WSRP…TMDL).

This sequence belongs to the mitochondrial carrier (TC 2.A.29) family.

The protein localises to the mitochondrion inner membrane. Its function is as follows. Mitochondrial transporter that mediates uptake of thiamine pyrophosphate (ThPP) into mitochondria. The chain is Mitochondrial thiamine pyrophosphate carrier 1 (TPC1) from Kluyveromyces lactis (strain ATCC 8585 / CBS 2359 / DSM 70799 / NBRC 1267 / NRRL Y-1140 / WM37) (Yeast).